The chain runs to 208 residues: MKFSTLKLATCYLYKVAAEAKVAGKEEFVGDSDSNYQNEYLVTRTTGKDTFTPEMTRKMVLENGLAIVRETTTYVNPYEVKFVPGPVLESLDKVAFASERFGAPNKFIPKPDFSYMEGYNKMAKKTGSSNARTPDEGKKAKNAPEEEKVKTSGSEDAKGEESAVEGKEPEQGENDVEVANPTKSSEKAGFFPNGSFARPSFGKYSSLA.

The segment at Lys-124–Ala-208 is disordered. The span at Thr-133–Glu-170 shows a compositional bias: basic and acidic residues.

It localises to the golgi apparatus. This is an uncharacterized protein from Encephalitozoon cuniculi (strain GB-M1) (Microsporidian parasite).